The sequence spans 199 residues: GTP cyclohydrolase-2 (199 aa).

49 to 53 (RIHSE) serves as a coordination point for GTP. Residues Cys54, Cys65, and Cys67 each contribute to the Zn(2+) site. GTP is bound by residues Gln70, 92–94 (EGR), and Thr114. Asp126 (proton acceptor) is an active-site residue. The active-site Nucleophile is Arg128. GTP is bound by residues Thr149 and Lys154.

Belongs to the GTP cyclohydrolase II family. As to quaternary structure, homodimer. It depends on Zn(2+) as a cofactor.

It carries out the reaction GTP + 4 H2O = 2,5-diamino-6-hydroxy-4-(5-phosphoribosylamino)-pyrimidine + formate + 2 phosphate + 3 H(+). The protein operates within cofactor biosynthesis; riboflavin biosynthesis; 5-amino-6-(D-ribitylamino)uracil from GTP: step 1/4. Its function is as follows. Catalyzes the conversion of GTP to 2,5-diamino-6-ribosylamino-4(3H)-pyrimidinone 5'-phosphate (DARP), formate and pyrophosphate. This Proteus mirabilis (strain HI4320) protein is GTP cyclohydrolase-2.